A 194-amino-acid chain; its full sequence is dTTP/UTP pyrophosphatase (194 aa).

Residue Asp66 is the Proton acceptor of the active site.

It belongs to the Maf family. YhdE subfamily. Requires a divalent metal cation as cofactor.

The protein localises to the cytoplasm. The catalysed reaction is dTTP + H2O = dTMP + diphosphate + H(+). It catalyses the reaction UTP + H2O = UMP + diphosphate + H(+). In terms of biological role, nucleoside triphosphate pyrophosphatase that hydrolyzes dTTP and UTP. May have a dual role in cell division arrest and in preventing the incorporation of modified nucleotides into cellular nucleic acids. The protein is dTTP/UTP pyrophosphatase of Anaeromyxobacter dehalogenans (strain 2CP-1 / ATCC BAA-258).